The primary structure comprises 621 residues: Chaperone protein DnaK (621 aa).

Thr179 bears the Phosphothreonine; by autocatalysis mark. Over residues 583-605 the composition is skewed to polar residues; it reads SQVQDTQGAAQGQSQGNPQQTAD. The segment at 583–621 is disordered; that stretch reads SQVQDTQGAAQGQSQGNPQQTADNRGKVVDAEIVDENKE. Over residues 606 to 621 the composition is skewed to basic and acidic residues; that stretch reads NRGKVVDAEIVDENKE.

This sequence belongs to the heat shock protein 70 family.

In terms of biological role, acts as a chaperone. In Endomicrobium trichonymphae, this protein is Chaperone protein DnaK.